Reading from the N-terminus, the 685-residue chain is DNA-directed RNA polymerase subunit beta' (685 aa).

C69, C71, C87, and C90 together coordinate Zn(2+). Positions 489, 491, and 493 each coordinate Mg(2+).

It belongs to the RNA polymerase beta' chain family. RpoC1 subfamily. As to quaternary structure, in plastids the minimal PEP RNA polymerase catalytic core is composed of four subunits: alpha, beta, beta', and beta''. When a (nuclear-encoded) sigma factor is associated with the core the holoenzyme is formed, which can initiate transcription. It depends on Mg(2+) as a cofactor. The cofactor is Zn(2+).

It is found in the plastid. The protein localises to the chloroplast. The enzyme catalyses RNA(n) + a ribonucleoside 5'-triphosphate = RNA(n+1) + diphosphate. Functionally, DNA-dependent RNA polymerase catalyzes the transcription of DNA into RNA using the four ribonucleoside triphosphates as substrates. This chain is DNA-directed RNA polymerase subunit beta', found in Buxus microphylla (Littleleaf boxwood).